The chain runs to 363 residues: Histidinol-phosphate aminotransferase (363 aa).

Lysine 220 carries the N6-(pyridoxal phosphate)lysine modification.

It belongs to the class-II pyridoxal-phosphate-dependent aminotransferase family. Histidinol-phosphate aminotransferase subfamily. As to quaternary structure, homodimer. Requires pyridoxal 5'-phosphate as cofactor.

The enzyme catalyses L-histidinol phosphate + 2-oxoglutarate = 3-(imidazol-4-yl)-2-oxopropyl phosphate + L-glutamate. It participates in amino-acid biosynthesis; L-histidine biosynthesis; L-histidine from 5-phospho-alpha-D-ribose 1-diphosphate: step 7/9. This chain is Histidinol-phosphate aminotransferase, found in Chlorobium chlorochromatii (strain CaD3).